The sequence spans 500 residues: Putative DNA recombinase (500 aa).

In terms of domain architecture, Resolvase/invertase-type recombinase catalytic spans 1–144; the sequence is MIAIYVRVST…SGRLQKMKKG (144 aa). S9 acts as the O-(5'-phospho-DNA)-serine intermediate in catalysis. The recombinase DNA-binding region spans 152–288; the sequence is LYGYKFVKEK…QELLGQSKRK (137 aa). Positions 372-448 form a coiled coil; the sequence is KEAEQSNHLS…IQSKMKVLDD (77 aa).

In the N-terminal section; belongs to the site-specific recombinase resolvase family.

Functionally, putative site-specific recombinase having a very important role in sporulation. It probably plays a role in the recombination of SpoIIIC and SpoIVCB to form sigma K factor. In Bacillus subtilis (strain 168), this protein is Putative DNA recombinase (cisA).